An 88-amino-acid polypeptide reads, in one-letter code: MMLQTAFTDLANPSYLNMGLALLLATIMVMILWAGMRLKSPAVFVIWALTSITLIFTFVTQFSFIWFWVMVMLSLLLISIVASIRYTL.

3 helical membrane passes run 16–36, 42–62, and 64–84; these read LNMG…WAGM, AVFV…VTQF, and FIWF…VASI.

It is found in the host membrane. The chain is Putative transmembrane protein ORF24 from Haloarcula hispanica (His1V).